A 356-amino-acid chain; its full sequence is Phospho-N-acetylmuramoyl-pentapeptide-transferase (356 aa).

A run of 10 helical transmembrane segments spans residues 4–24 (ILLA…WFIH), 53–73 (GGAV…LVTW), 76–96 (PSIS…IGFL), 116–136 (LLGQ…FPDV), 152–172 (ISWL…LIAG), 186–206 (LATG…IWQF), 228–248 (DIAV…WWNA), 253–273 (IFLG…MAVV), 278–298 (LLLV…MLQV), and 333–353 (FWII…AEWV).

This sequence belongs to the glycosyltransferase 4 family. MraY subfamily. Mg(2+) serves as cofactor.

It is found in the cell membrane. It carries out the reaction UDP-N-acetyl-alpha-D-muramoyl-L-alanyl-gamma-D-glutamyl-meso-2,6-diaminopimeloyl-D-alanyl-D-alanine + di-trans,octa-cis-undecaprenyl phosphate = di-trans,octa-cis-undecaprenyl diphospho-N-acetyl-alpha-D-muramoyl-L-alanyl-D-glutamyl-meso-2,6-diaminopimeloyl-D-alanyl-D-alanine + UMP. It functions in the pathway cell wall biogenesis; peptidoglycan biosynthesis. Functionally, catalyzes the initial step of the lipid cycle reactions in the biosynthesis of the cell wall peptidoglycan: transfers peptidoglycan precursor phospho-MurNAc-pentapeptide from UDP-MurNAc-pentapeptide onto the lipid carrier undecaprenyl phosphate, yielding undecaprenyl-pyrophosphoryl-MurNAc-pentapeptide, known as lipid I. The sequence is that of Phospho-N-acetylmuramoyl-pentapeptide-transferase from Cutibacterium acnes (strain DSM 16379 / KPA171202) (Propionibacterium acnes).